The sequence spans 486 residues: Glycogen synthase (486 aa).

ADP-alpha-D-glucose is bound at residue K20.

This sequence belongs to the glycosyltransferase 1 family. Bacterial/plant glycogen synthase subfamily.

It catalyses the reaction [(1-&gt;4)-alpha-D-glucosyl](n) + ADP-alpha-D-glucose = [(1-&gt;4)-alpha-D-glucosyl](n+1) + ADP + H(+). The protein operates within glycan biosynthesis; glycogen biosynthesis. Its function is as follows. Synthesizes alpha-1,4-glucan chains using ADP-glucose. The protein is Glycogen synthase of Aeromonas salmonicida (strain A449).